A 515-amino-acid chain; its full sequence is 1-pyrroline-5-carboxylate dehydrogenase (515 aa).

Active-site residues include Glu-286 and Cys-320.

Belongs to the aldehyde dehydrogenase family. RocA subfamily.

It catalyses the reaction L-glutamate 5-semialdehyde + NAD(+) + H2O = L-glutamate + NADH + 2 H(+). The protein operates within amino-acid degradation; L-proline degradation into L-glutamate; L-glutamate from L-proline: step 2/2. This chain is 1-pyrroline-5-carboxylate dehydrogenase, found in Bacillus cytotoxicus (strain DSM 22905 / CIP 110041 / 391-98 / NVH 391-98).